The following is a 101-amino-acid chain: Urease subunit beta (101 aa).

Belongs to the urease beta subunit family. As to quaternary structure, heterotrimer of UreA (gamma), UreB (beta) and UreC (alpha) subunits. Three heterotrimers associate to form the active enzyme.

Its subcellular location is the cytoplasm. The enzyme catalyses urea + 2 H2O + H(+) = hydrogencarbonate + 2 NH4(+). It participates in nitrogen metabolism; urea degradation; CO(2) and NH(3) from urea (urease route): step 1/1. The chain is Urease subunit beta from Thermosynechococcus vestitus (strain NIES-2133 / IAM M-273 / BP-1).